A 430-amino-acid polypeptide reads, in one-letter code: uncharacterized protein (430 aa).

It is found in the cytoplasm. The protein localises to the nucleus. This is an uncharacterized protein from Schizosaccharomyces pombe (strain 972 / ATCC 24843) (Fission yeast).